The chain runs to 369 residues: Peptide chain release factor 2 (369 aa).

Gln-252 is modified (N5-methylglutamine).

It belongs to the prokaryotic/mitochondrial release factor family. In terms of processing, methylated by PrmC. Methylation increases the termination efficiency of RF2.

It is found in the cytoplasm. In terms of biological role, peptide chain release factor 2 directs the termination of translation in response to the peptide chain termination codons UGA and UAA. The sequence is that of Peptide chain release factor 2 from Staphylococcus aureus (strain bovine RF122 / ET3-1).